A 479-amino-acid chain; its full sequence is Odorant receptor coreceptor (479 aa).

At 1–43 the chain is on the cytoplasmic side; sequence MMKMKQQGLVADLLPNIRVMKFFGHFVFNYYDDNSSKYLHKIF. Residues 44–64 form a helical membrane-spanning segment; that stretch reads CCVNLFLLLLQFALCAVNLII. Residues 65-73 are Extracellular-facing; it reads ESADVDDLT. Residues 74-94 traverse the membrane as a helical segment; sequence ANTITLLFFTHSIVKIIYFAV. The Cytoplasmic segment spans residues 95–133; the sequence is RSKYFYRTWAIWNNPNSHPLFAESNARYHAIALKKMRLL. A helical membrane pass occupies residues 134-154; it reads LFLVGATTVLSAIAWTVLTFF. Residues 155 to 190 are Extracellular-facing; the sequence is EHPIRKLVDPVTNETTIIELPQLLLRSYYPFDASKG. Residue asparagine 167 is glycosylated (N-linked (GlcNAc...) asparagine). A helical transmembrane segment spans residues 191–211; that stretch reads IMHVIVLIYQFYWVLFMLIDA. Residues 212-350 are Cytoplasmic-facing; it reads NSLDVLFCSW…IVRLVTAVGD (139 aa). Residues 261-280 are disordered; sequence SAEHLRESENQPPPPVPPQG. A helical transmembrane segment spans residues 351–371; it reads AYGFALLLHMLTTTITLTLLA. The Extracellular portion of the chain corresponds to 372-383; it reads YQATKVNGVNVY. Residues 384–404 form a helical membrane-spanning segment; the sequence is AASTIGYIIYTFGQVFLFCIF. Residues 405 to 455 lie on the Cytoplasmic side of the membrane; it reads GNRLIEESTSVMEAAYSCHWYDGSEEAKTFVQIVCQQCQKAMSISGAKFFT. Residues 456 to 476 traverse the membrane as a helical segment; that stretch reads VSLDLFASVLGAVVTYFMVLV. Topologically, residues 477-479 are extracellular; sequence QLK.

It belongs to the insect chemoreceptor superfamily. Heteromeric odorant receptor channel (TC 1.A.69) family. Orco subfamily. As to quaternary structure, heterodimer with conventional odorant receptors (ORs).

Its subcellular location is the cell membrane. Functionally, odorant coreceptor which complexes with conventional odorant receptors (ORs) to form odorant-sensing units, providing sensitive and prolonged odorant signaling and calcium permeability. Obligate coreceptor of all odorant receptors. Orco is a universal and integral part of the functional odorant receptor, involved in the dendritic localization of other olfactory receptors. Can form functional ion channels in the absence of an odor-binding odorant receptor. Plays a central role in the perception of olfactory stimuli in ants and is essential for ant social organization. Required for pheromone sensing and mating behavior. Also required for the development and maintenance of odorant receptor neurons (ORNs) and of antennal lobe glomeruli. The protein is Odorant receptor coreceptor of Harpegnathos saltator (Jerdon's jumping ant).